A 300-amino-acid polypeptide reads, in one-letter code: Oxidoreductase BOA1 (300 aa).

The protein belongs to the NmrA-type oxidoreductase family. Isoflavone reductase subfamily.

It participates in polyketide biosynthesis. In terms of biological role, oxidoreductase; part of the gene cluster A that mediates the biosynthesis of botcinic acid and its botcinin derivatives, acetate-derived polyketides that contribute to virulence when combined with the sesquiterpene botrydial. Botcinic acid and its derivatives have been shown to induce chlorosis and necrosis during host plant infection, but also have antifungal activities. Two polyketide synthases, BOA6 and BOA9, are involved in the biosynthesis of botcinins. BOA6 mediates the formation of the per-methylated tetraketide core by condensation of four units of malonyl-CoA with one unit of acetyl-CoA, which would be methylated in activated methylene groups to yield a bicyclic acid intermediate that could then either be converted to botrylactone derivatives or lose the starter acetate unit through a retro-Claisen type C-C bond cleavage to yield botcinin derivatives. The second polyketide synthase, BOA9, is probably required for the biosynthesis of the tetraketide side chain of botcinins. The methyltransferase (MT) domain within BOA6 is probably responsible for the incorporation of four methyl groups. The trans-enoyl reductase BOA5 might take over the enoyl reductase function of BOA6 that misses an ER domain. The monooxygenases BOA2, BOA3 and BOA4 might be involved in further hydroxylations at C4, C5 and C8, whereas BOA7, close to BOA9, could potentially be involved in the hydroxylation at C4 in the side chain of botcinins. The sequence is that of Oxidoreductase BOA1 from Botryotinia fuckeliana (strain B05.10) (Noble rot fungus).